Consider the following 156-residue polypeptide: S-ribosylhomocysteine lyase (156 aa).

Fe cation is bound by residues histidine 54, histidine 58, and cysteine 126.

It belongs to the LuxS family. As to quaternary structure, homodimer. Fe cation serves as cofactor.

It carries out the reaction S-(5-deoxy-D-ribos-5-yl)-L-homocysteine = (S)-4,5-dihydroxypentane-2,3-dione + L-homocysteine. Its function is as follows. Involved in the synthesis of autoinducer 2 (AI-2) which is secreted by bacteria and is used to communicate both the cell density and the metabolic potential of the environment. The regulation of gene expression in response to changes in cell density is called quorum sensing. Catalyzes the transformation of S-ribosylhomocysteine (RHC) to homocysteine (HC) and 4,5-dihydroxy-2,3-pentadione (DPD). The sequence is that of S-ribosylhomocysteine lyase from Shouchella clausii (strain KSM-K16) (Alkalihalobacillus clausii).